Reading from the N-terminus, the 150-residue chain is Ribosome maturation factor RimP (150 aa).

Belongs to the RimP family.

The protein resides in the cytoplasm. In terms of biological role, required for maturation of 30S ribosomal subunits. The chain is Ribosome maturation factor RimP from Acaryochloris marina (strain MBIC 11017).